We begin with the raw amino-acid sequence, 444 residues long: Phosphatidate cytidylyltransferase 2 (444 aa).

A compositionally biased stretch (basic and acidic residues) spans 1-38; it reads MTELRQRVVREDAPPEDKESESEAKLDGETASDSESRA. The interval 1–48 is disordered; that stretch reads MTELRQRVVREDAPPEDKESESEAKLDGETASDSESRAETAPLPTSVD. Serine 20 bears the Phosphoserine mark. A Phosphothreonine modification is found at threonine 30. Residues serine 32, serine 34, and serine 36 each carry the phosphoserine modification. Threonine 50 bears the Phosphothreonine mark. 6 consecutive transmembrane segments (helical) span residues 78-98, 129-149, 165-185, 212-232, 261-281, and 339-359; these read MIAF…MIVM, WYFL…DYFF, HRFI…LSLV, LVIH…SCVI, GFIG…YVMS, and IALS…ASGF.

Belongs to the CDS family. Homodimer. As to expression, ubiquitous. Expressed in the ganglion cell layer and inner nuclear layer of the retina.

It is found in the endoplasmic reticulum membrane. It carries out the reaction a 1,2-diacyl-sn-glycero-3-phosphate + CTP + H(+) = a CDP-1,2-diacyl-sn-glycerol + diphosphate. The enzyme catalyses 1-octadecanoyl-2-(5Z,8Z,11Z,14Z-eicosatetraenoyl)-sn-glycero-3-phosphate + CTP + H(+) = 1-octadecanoyl-2-(5Z,8Z,11Z,14Z-eicosatetraenoyl)-sn-glycero-3-cytidine-5'-diphosphate + diphosphate. The catalysed reaction is 1-octadecanoyl-2-(9Z,12Z-octadecadienoyl)-sn-glycero-3-phosphate + CTP + H(+) = 1-octadecanoyl-2-(9Z,12Z-octadecadienoyl)-sn-glycero-3-cytidine-5'-diphosphate + diphosphate. It catalyses the reaction 1-hexadecanoyl-2-(5Z,8Z,11Z,14Z-eicosatetraenoyl)-sn-glycero-3-phosphate + CTP + H(+) = 1-hexadecanoyl-2-(5Z,8Z,11Z,14Z-eicosatetraenoyl)-sn-glycero-3-cytidine-5'-diphosphate + diphosphate. It carries out the reaction 1,2-di-(5Z,8Z,11Z,14Z)-eicosatetraenoyl-sn-glycero-3-phosphate + CTP + H(+) = 1,2-di-(5Z,8Z,11Z,14Z-eicosatetraenoyl)-sn-glycero-3-cytidine-5'-diphosphate + diphosphate. The enzyme catalyses 1-octadecanoyl-2-(9Z-octadecenoyl)-sn-glycero-3-phosphate + CTP + H(+) = 1-octadecanoyl-2-(9Z-octadecenoyl)-sn-glycero-3-cytidine-5'-diphosphate + diphosphate. The catalysed reaction is 1-octadecanoyl-2-(4Z,7Z,10Z,13Z,16Z,19Z-docosahexaenoyl)-sn-glycero-3-phosphate + CTP + H(+) = 1-octadecanoyl-2-(4Z,7Z,10Z,13Z,16Z,19Z-docosahexaenoyl)-sn-glycero-3-cytidine-5'-diphosphate + diphosphate. It catalyses the reaction 1,2-di-(9Z,12Z-octadecadienoyl)-sn-glycero-3-phosphate + CTP + H(+) = 1,2-di-(9Z,12Z-octadecadienoyl)-sn-glycero-3-cytidine-5'-diphosphate + diphosphate. It carries out the reaction 1,2-di-(9Z-octadecenoyl)-sn-glycero-3-phosphate + CTP + H(+) = 1,2-di-(9Z-octadecenoyl)-sn-glycero-3-cytidine-5'-diphosphate + diphosphate. Its pathway is phospholipid metabolism; CDP-diacylglycerol biosynthesis; CDP-diacylglycerol from sn-glycerol 3-phosphate: step 3/3. In terms of biological role, catalyzes the conversion of phosphatidic acid (PA) to CDP-diacylglycerol (CDP-DAG), an essential intermediate in the synthesis of phosphatidylglycerol, cardiolipin and phosphatidylinositol. Exhibits specificity for the nature of the acyl chains at the sn-1 and sn-2 positions in the substrate, PA and the preferred acyl chain composition is 1-stearoyl-2-arachidonoyl-sn-phosphatidic acid. Plays an important role in regulating the growth and maturation of lipid droplets which are storage organelles at the center of lipid and energy homeostasis. The sequence is that of Phosphatidate cytidylyltransferase 2 from Mus musculus (Mouse).